The sequence spans 567 residues: Oxygen-dependent choline dehydrogenase (567 aa).

6–35 (DYIIVGAGSAGNTLATRLTEDEGVTVLLLE) lines the FAD pocket. The active-site Proton acceptor is His475.

Belongs to the GMC oxidoreductase family. FAD serves as cofactor.

The enzyme catalyses choline + A = betaine aldehyde + AH2. It carries out the reaction betaine aldehyde + NAD(+) + H2O = glycine betaine + NADH + 2 H(+). The protein operates within amine and polyamine biosynthesis; betaine biosynthesis via choline pathway; betaine aldehyde from choline (cytochrome c reductase route): step 1/1. In terms of biological role, involved in the biosynthesis of the osmoprotectant glycine betaine. Catalyzes the oxidation of choline to betaine aldehyde and betaine aldehyde to glycine betaine at the same rate. The sequence is that of Oxygen-dependent choline dehydrogenase from Pseudomonas fluorescens (strain Pf0-1).